Reading from the N-terminus, the 434-residue chain is Glutamate/glutamine/aspartate/asparagine transport system permease protein BztC (434 aa).

The next 10 membrane-spanning stretches (helical) occupy residues Leu41 to Leu61, Leu113 to Pro133, Lys135 to Pro155, Ile156 to Leu176, Leu180 to Ala200, Phe227 to Leu247, Gly272 to Pro292, Leu298 to Ile318, Ile360 to Phe380, and Gly398 to Met418. Residues Phe227–Ser422 enclose the ABC transmembrane type-1 domain.

It belongs to the binding-protein-dependent transport system permease family. HisMQ subfamily. As to quaternary structure, bztB and BztC form a heterodimer which can form a membrane complex with a homodimer of BztD.

The protein resides in the cell inner membrane. Part of a binding-protein-dependent transport system for glutamate, glutamine, aspartate and asparagine. Probably responsible for the translocation of the substrate across the membrane. The polypeptide is Glutamate/glutamine/aspartate/asparagine transport system permease protein BztC (bztC) (Rhodobacter capsulatus (strain ATCC BAA-309 / NBRC 16581 / SB1003)).